Here is a 485-residue protein sequence, read N- to C-terminus: Glutamyl-tRNA(Gln) amidotransferase subunit A (485 aa).

Catalysis depends on charge relay system residues Lys-79 and Ser-154. Ser-178 (acyl-ester intermediate) is an active-site residue.

The protein belongs to the amidase family. GatA subfamily. As to quaternary structure, heterotrimer of A, B and C subunits.

The enzyme catalyses L-glutamyl-tRNA(Gln) + L-glutamine + ATP + H2O = L-glutaminyl-tRNA(Gln) + L-glutamate + ADP + phosphate + H(+). In terms of biological role, allows the formation of correctly charged Gln-tRNA(Gln) through the transamidation of misacylated Glu-tRNA(Gln) in organisms which lack glutaminyl-tRNA synthetase. The reaction takes place in the presence of glutamine and ATP through an activated gamma-phospho-Glu-tRNA(Gln). In Geobacillus stearothermophilus (Bacillus stearothermophilus), this protein is Glutamyl-tRNA(Gln) amidotransferase subunit A.